Consider the following 533-residue polypeptide: Thromboxane-A synthase (533 aa).

Topologically, residues 1-10 are cytoplasmic; it reads MEVLGLLKFE. The chain crosses the membrane as a helical span at residues 11 to 31; it reads VSGTIVTVTLLVALLALLKWY. Residues 32–75 lie on the Lumenal side of the membrane; that stretch reads SMSAFSRLEKLGIRHPKPSPFVGNLMFFRQGFWESQLELRERYG. The chain crosses the membrane as a helical span at residues 76–96; that stretch reads PLCGYYLGRRMHVVISEPDMI. The Cytoplasmic segment spans residues 97–223; that stretch reads KQVLVENFSN…RRASTFCIPR (127 aa). The chain crosses the membrane as a helical span at residues 224–244; it reads PLLVLILSFPSIMVPLARILP. Residues 245 to 335 are Lumenal-facing; it reads NKNRDELNGF…FTVDEIVGQA (91 aa). The chain crosses the membrane as a helical span at residues 336 to 356; the sequence is FLFLIAGHEVITNTLSFITYL. Residues 357-533 lie on the Cytoplasmic side of the membrane; that stretch reads LATHPDCQER…NGVYIKIVSR (177 aa). Position 479 (Cys479) interacts with heme.

Belongs to the cytochrome P450 family. As to quaternary structure, monomer. Requires heme as cofactor. In terms of tissue distribution, expressed primarily in lung, kidney, and spleen.

It localises to the endoplasmic reticulum membrane. The enzyme catalyses prostaglandin H2 = thromboxane A2. The catalysed reaction is prostaglandin H2 = (12S)-hydroxy-(5Z,8E,10E)-heptadecatrienoate + malonaldehyde. It carries out the reaction a hydroperoxyeicosatetraenoate = an oxoeicosatetraenoate + H2O. It catalyses the reaction (15S)-hydroperoxy-(5Z,8Z,11Z,13E)-eicosatetraenoate = 15-oxo-(5Z,8Z,11Z,13E)-eicosatetraenoate + H2O. The enzyme catalyses (15S)-hydroperoxy-(5Z,8Z,11Z,13E)-eicosatetraenoate + AH2 = (15S)-hydroxy-(5Z,8Z,11Z,13E)-eicosatetraenoate + A + H2O. Its function is as follows. Catalyzes the conversion of prostaglandin H2 (PGH2) to thromboxane A2 (TXA2), a potent inducer of blood vessel constriction and platelet aggregation. Also cleaves PGH2 to 12-hydroxy-heptadecatrienoicacid (12-HHT) and malondialdehyde, which is known to act as a mediator of DNA damage. 12-HHT and malondialdehyde are formed stoichiometrically in the same amounts as TXA2. Additionally, displays dehydratase activity, toward (15S)-hydroperoxy-(5Z,8Z,11Z,13E)-eicosatetraenoate (15(S)-HPETE) producing 15-KETE and 15-HETE. The protein is Thromboxane-A synthase (Tbxas1) of Mus musculus (Mouse).